A 272-amino-acid polypeptide reads, in one-letter code: MSDEETEQVEEQYEEEEEAQEEEVQEEAPEPEEVQEDAVAEEEREEDEEEEKPRPKLTAPKIPEGEKVDFDDIQKKRQNKDLMELQALIDSHFEARKKEEEELIALKERIEKRRAERAEQQRIRAEKEREPQNRLAEEKARREEEDAKRRAEDDMKKKKALSSMGANYSSYLAKADQKRGKKQTAREMKKKILAERRKPLNIDHLSDDKLRDKAKELWDTLYQLETDKFEFGEKLKRQKYDITTLRSRIDQAQKHSKKAGATAKGKVGGRWK.

The span at 1 to 50 (MSDEETEQVEEQYEEEEEAQEEEVQEEAPEPEEVQEDAVAEEEREEDEEE) shows a compositional bias: acidic residues. Residues 1–75 (MSDEETEQVE…EKVDFDDIQK (75 aa)) are disordered. Position 2 is an N-acetylserine (Ser-2). Ser-2 bears the Phosphoserine mark. A compositionally biased stretch (basic and acidic residues) spans 63-75 (PEGEKVDFDDIQK). Phosphoserine is present on Ser-91. Basic and acidic residues predominate over residues 114-156 (RAERAEQQRIRAEKEREPQNRLAEEKARREEEDAKRRAEDDMK). The segment at 114-193 (RAERAEQQRI…TAREMKKKIL (80 aa)) is disordered. 3 positions are modified to phosphoserine: Ser-162, Ser-169, and Ser-170. The segment covering 184–193 (TAREMKKKIL) has biased composition (basic and acidic residues). Ser-206 is modified (phosphoserine). Residue Tyr-222 is modified to Phosphotyrosine. A disordered region spans residues 248-272 (RIDQAQKHSKKAGATAKGKVGGRWK).

Belongs to the troponin T family. Expressed predominantly in skeletal muscle.

In terms of biological role, troponin T is the tropomyosin-binding subunit of troponin, the thin filament regulatory complex which confers calcium-sensitivity to striated muscle actomyosin ATPase activity. In Mus musculus (Mouse), this protein is Troponin T, fast skeletal muscle (Tnnt3).